We begin with the raw amino-acid sequence, 230 residues long: Cytidylate kinase (230 aa).

12–20 (GPSGAGKGT) contributes to the ATP binding site.

It belongs to the cytidylate kinase family. Type 1 subfamily.

It localises to the cytoplasm. The catalysed reaction is CMP + ATP = CDP + ADP. The enzyme catalyses dCMP + ATP = dCDP + ADP. The sequence is that of Cytidylate kinase from Aeromonas hydrophila subsp. hydrophila (strain ATCC 7966 / DSM 30187 / BCRC 13018 / CCUG 14551 / JCM 1027 / KCTC 2358 / NCIMB 9240 / NCTC 8049).